A 311-amino-acid polypeptide reads, in one-letter code: DNA repair and recombination protein RadA (311 aa).

104–111 provides a ligand contact to ATP; the sequence is GEFGSGKS.

Belongs to the eukaryotic RecA-like protein family.

Its function is as follows. Involved in DNA repair and in homologous recombination. Binds and assemble on single-stranded DNA to form a nucleoprotein filament. Hydrolyzes ATP in a ssDNA-dependent manner and promotes DNA strand exchange between homologous DNA molecules. In Methanobrevibacter smithii (strain ATCC 35061 / DSM 861 / OCM 144 / PS), this protein is DNA repair and recombination protein RadA.